Consider the following 151-residue polypeptide: MEEEGEAQGRAVPGGRLNMSHGFVHHIRRNQLARDDYDREVKQAKEKQKKRYTPGPTRQKKPDLQVYHPRQREKAHTTETLKDEPNDNGTQLFCLDFEADGGEVTSIIVYEDDDAEQLATMISNQNQLEGDMREALKQRIQEEISKRRVQR.

The disordered stretch occupies residues 1–89; that stretch reads MEEEGEAQGR…TLKDEPNDNG (89 aa). 2 stretches are compositionally biased toward basic and acidic residues: residues 32–46 and 70–85; these read LARD…QAKE and RQRE…KDEP.

It belongs to the UPF0561 family.

This chain is UPF0561 protein C2orf68 homolog, found in Xenopus laevis (African clawed frog).